A 331-amino-acid chain; its full sequence is DNA-directed RNA polymerase subunit alpha (331 aa).

An alpha N-terminal domain (alpha-NTD) region spans residues Met-1–Lys-237. The interval Phe-251–Gln-331 is alpha C-terminal domain (alpha-CTD).

This sequence belongs to the RNA polymerase alpha chain family. As to quaternary structure, homodimer. The RNAP catalytic core consists of 2 alpha, 1 beta, 1 beta' and 1 omega subunit. When a sigma factor is associated with the core the holoenzyme is formed, which can initiate transcription.

The enzyme catalyses RNA(n) + a ribonucleoside 5'-triphosphate = RNA(n+1) + diphosphate. DNA-dependent RNA polymerase catalyzes the transcription of DNA into RNA using the four ribonucleoside triphosphates as substrates. This chain is DNA-directed RNA polymerase subunit alpha, found in Blochmanniella floridana.